The following is a 433-amino-acid chain: D-amino acid dehydrogenase (433 aa).

3-17 (VLVLGSGVIGTTSAY) is an FAD binding site.

This sequence belongs to the DadA oxidoreductase family. It depends on FAD as a cofactor.

The enzyme catalyses a D-alpha-amino acid + A + H2O = a 2-oxocarboxylate + AH2 + NH4(+). The protein operates within amino-acid degradation; D-alanine degradation; NH(3) and pyruvate from D-alanine: step 1/1. Its function is as follows. Oxidative deamination of D-amino acids. The sequence is that of D-amino acid dehydrogenase from Pseudomonas syringae pv. syringae (strain B728a).